The chain runs to 179 residues: Probable RNA 2'-phosphotransferase (179 aa).

Belongs to the KptA/TPT1 family.

Its function is as follows. Removes the 2'-phosphate from RNA via an intermediate in which the phosphate is ADP-ribosylated by NAD followed by a presumed transesterification to release the RNA and generate ADP-ribose 1''-2''-cyclic phosphate (APPR&gt;P). May function as an ADP-ribosylase. The polypeptide is Probable RNA 2'-phosphotransferase (Fusobacterium nucleatum subsp. nucleatum (strain ATCC 25586 / DSM 15643 / BCRC 10681 / CIP 101130 / JCM 8532 / KCTC 2640 / LMG 13131 / VPI 4355)).